The chain runs to 595 residues: Ketol-acid reductoisomerase, chloroplastic (595 aa).

A chloroplast-targeting transit peptide spans Met1–Met72. The KARI N-terminal Rossmann domain occupies Val108 to Thr306. Residues Gly129 to Gln136, Arg162 to Ser167, and Ser201 to Gln205 contribute to the NADP(+) site. Residue His226 is part of the active site. 2 consecutive KARI C-terminal knotted domains span residues Thr307–Gly455 and Asp456–Leu592. Mg(2+) is bound by residues Asp315, Glu319, Glu492, and Glu496. Residue Ser518 participates in substrate binding.

It belongs to the ketol-acid reductoisomerase family. In terms of assembly, homodimer. It depends on Mg(2+) as a cofactor.

Its subcellular location is the plastid. The protein localises to the chloroplast. The enzyme catalyses (2R)-2,3-dihydroxy-3-methylbutanoate + NADP(+) = (2S)-2-acetolactate + NADPH + H(+). It catalyses the reaction (2R,3R)-2,3-dihydroxy-3-methylpentanoate + NADP(+) = (S)-2-ethyl-2-hydroxy-3-oxobutanoate + NADPH + H(+). Its pathway is amino-acid biosynthesis; L-isoleucine biosynthesis; L-isoleucine from 2-oxobutanoate: step 2/4. It functions in the pathway amino-acid biosynthesis; L-valine biosynthesis; L-valine from pyruvate: step 2/4. This is Ketol-acid reductoisomerase, chloroplastic (AHRI) from Spinacia oleracea (Spinach).